A 250-amino-acid chain; its full sequence is 5-oxoprolinase subunit A (250 aa).

This sequence belongs to the LamB/PxpA family. As to quaternary structure, forms a complex composed of PxpA, PxpB and PxpC.

It catalyses the reaction 5-oxo-L-proline + ATP + 2 H2O = L-glutamate + ADP + phosphate + H(+). Catalyzes the cleavage of 5-oxoproline to form L-glutamate coupled to the hydrolysis of ATP to ADP and inorganic phosphate. This Staphylococcus aureus (strain NCTC 8325 / PS 47) protein is 5-oxoprolinase subunit A.